Reading from the N-terminus, the 122-residue chain is Large ribosomal subunit protein bL12 (122 aa).

Belongs to the bacterial ribosomal protein bL12 family. As to quaternary structure, homodimer. Part of the ribosomal stalk of the 50S ribosomal subunit. Forms a multimeric L10(L12)X complex, where L10 forms an elongated spine to which 2 to 4 L12 dimers bind in a sequential fashion. Binds GTP-bound translation factors.

Functionally, forms part of the ribosomal stalk which helps the ribosome interact with GTP-bound translation factors. Is thus essential for accurate translation. This chain is Large ribosomal subunit protein bL12, found in Actinobacillus pleuropneumoniae serotype 5b (strain L20).